A 66-amino-acid chain; its full sequence is Alpha-conotoxin GID (66 aa).

An N-terminal signal peptide occupies residues methionine 1–serine 21. Positions phenylalanine 22 to threonine 44 are excised as a propeptide. The interval isoleucine 45 to glutamate 48 is N-terminal tail important for activity on alpha-3-beta-2/CHRNA3-CHRNB2 and alpha-4-beta-2/CHRNA4-CHRNB2 nAChR. At glutamate 48 the chain carries 4-carboxyglutamate. Cystine bridges form between cysteine 49-cysteine 55 and cysteine 50-cysteine 63. The tract at residues serine 51 to proline 53 is ser-Xaa-Pro motif, crucial for potent interaction with nAChR. A 4-hydroxyproline modification is found at proline 60.

Belongs to the conotoxin A superfamily. Post-translationally, gamma-carboxyglutamation of Glu-48 seems to be not important for nAChR inhibition, since synthetic peptides without this modification do not show change in inhibition of alpha-7/CHRNA7 and alpha-3-beta-2/CHRNA3-CHRNB2 nAChR and show a 2.3-fold increase in inhibition of alpha-4-beta-2/CHRNA4-CHRNB2 nAChR. Hydroxylation of Pro-60 seems to be important for nAChR inhibition, since synthetic peptides without this modification show a small decrease in inhibition of alpha-7/CHRNA7 and alpha-3-beta-2/CHRNA3-CHRNB2 nAChR and a very important decrease in inhibition of alpha-4-beta-2/CHRNA4-CHRNB2 nAChR. In terms of processing, an amidation of Cys-63 increases potency against alpha-7/CHRNA7 (2.6-fold) and alpha-3-beta-2/CHRNA3-CHRNB2 (2-fold) nAChR. On the other hand, the peptide has no more activity on alpha-4-beta-2/CHRNA4-CHRNB2 nAChR with an amidated Cys-63. In terms of tissue distribution, expressed by the venom duct.

It localises to the secreted. In terms of biological role, alpha-conotoxins act on postsynaptic membranes, they bind to the nicotinic acetylcholine receptors (nAChR) and thus inhibit them. This toxin reversibly blocks alpha-3-beta-2/CHRNA3-CHRNB2 (IC(50)=3.1-5.1 nM), alpha-7/CHRNA7 (IC(50)=4.5-5.1 nM), and alpha-4-beta-2/CHRNA4-CHRNB2 (IC(50)=128.6-390 nM) nAChRs. This Conus geographus (Geography cone) protein is Alpha-conotoxin GID.